Reading from the N-terminus, the 278-residue chain is S-methyl-5'-thioadenosine phosphorylase (278 aa).

Residues S13, 55 to 56, and 88 to 89 contribute to the phosphate site; these read RH and TA. M190 serves as a coordination point for substrate. Position 191 (T191) interacts with phosphate. 214–216 is a binding site for substrate; sequence DYD.

This sequence belongs to the PNP/MTAP phosphorylase family. MTAP subfamily. As to quaternary structure, homotrimer.

It localises to the cytoplasm. The protein localises to the nucleus. It carries out the reaction S-methyl-5'-thioadenosine + phosphate = 5-(methylsulfanyl)-alpha-D-ribose 1-phosphate + adenine. It participates in amino-acid biosynthesis; L-methionine biosynthesis via salvage pathway; S-methyl-5-thio-alpha-D-ribose 1-phosphate from S-methyl-5'-thioadenosine (phosphorylase route): step 1/1. Functionally, catalyzes the reversible phosphorylation of S-methyl-5'-thioadenosine (MTA) to adenine and 5-methylthioribose-1-phosphate. Involved in the breakdown of MTA, a major by-product of polyamine biosynthesis. Responsible for the first step in the methionine salvage pathway after MTA has been generated from S-adenosylmethionine. Has broad substrate specificity with 6-aminopurine nucleosides as preferred substrates. This chain is S-methyl-5'-thioadenosine phosphorylase, found in Anopheles gambiae (African malaria mosquito).